The chain runs to 297 residues: ABSCISIC ACID-INSENSITIVE 5-like protein 2 (297 aa).

Ser21, Ser43, and Ser81 each carry phosphoserine. 2 disordered regions span residues 100–119 and 138–157; these read IQQN…QPTL and IPGS…SGAG. Position 118 is a phosphothreonine (Thr118). Residues 146–157 show a composition bias toward gly residues; it reads PVGGGSAGSGAG. In terms of domain architecture, bZIP spans 225-288; the sequence is VERRQKRMIK…SVPPPDPKRQ (64 aa). The tract at residues 227–246 is basic motif; it reads RRQKRMIKNRESAARSRARK. The tract at residues 253–267 is leucine-zipper; sequence LEIKVSRLEEENERL. Positions 272 to 297 are disordered; that stretch reads EVEKILPSVPPPDPKRQLRRTSSAPF.

Belongs to the bZIP family. ABI5 subfamily. As to quaternary structure, DNA-binding heterodimer with ABI5/DPBF1, DPBF2 or EEL/DPBF4. Interacts with the AFP proteins AFP1, AFP2, AFP3 and AFP4. As to expression, predominantly expressed in seeds.

It localises to the nucleus. Its function is as follows. Binds to the embryo specification element and the ABA-responsive element (ABRE) of the Dc3 gene promoter. Could participate in abscisic acid-regulated gene expression during seed development. This chain is ABSCISIC ACID-INSENSITIVE 5-like protein 2 (DPBF3), found in Arabidopsis thaliana (Mouse-ear cress).